Here is a 552-residue protein sequence, read N- to C-terminus: Steroid transmembrane transporter SLC22A24 (552 aa).

Transmembrane regions (helical) follow at residues 16 to 36 (FQIC…PNIV), 146 to 166 (SMVQ…YGHL), 178 to 200 (LCFL…LVYC), 204 to 226 (FLAG…EWTL), 234 to 254 (IMVL…LAFA), 260 to 280 (ILQL…WKMV), 350 to 370 (VFGL…LILN), 380 to 400 (LFQI…LLTL), 407 to 427 (ISQI…TFLP), 435 to 455 (VVLA…ASVH), 474 to 492 (VSGR…LMAY), and 496 to 516 (LPWI…LLLP).

It belongs to the major facilitator (TC 2.A.1) superfamily. Organic cation transporter (TC 2.A.1.19) family. In terms of tissue distribution, localized to the kidney. Highly specific expression pattern in the nephron, localized to segment 3 of the proximal tubule.

It is found in the cell membrane. It carries out the reaction estrone 3-sulfate(out) + glutarate(in) = estrone 3-sulfate(in) + glutarate(out). It catalyses the reaction 17beta-estradiol 17-O-(beta-D-glucuronate)(out) + glutarate(in) = 17beta-estradiol 17-O-(beta-D-glucuronate)(in) + glutarate(out). The catalysed reaction is taurocholate(out) + glutarate(in) = taurocholate(in) + glutarate(out). The enzyme catalyses 5alpha-androstane-3alpha,17beta-diol 3-O-(beta-D-glucuronate)(out) + glutarate(in) = 5alpha-androstane-3alpha,17beta-diol 3-O-(beta-D-glucuronate)(in) + glutarate(out). It carries out the reaction glycocholate(out) + glutarate(in) = glycocholate(in) + glutarate(out). It catalyses the reaction dehydroepiandrosterone 3-sulfate(out) + glutarate(in) = dehydroepiandrosterone 3-sulfate(in) + glutarate(out). The catalysed reaction is glutarate(in) + succinate(out) = glutarate(out) + succinate(in). Transport is chloride sensitive and transtimulated by glutaric acid. Transport is inhibited by anionic compounds from different chemical classes. Renal transmembrane organic anion/dicarboxylate exchanger that participates in the reabsorption of conjugated steroids including estradiol-17beta-D-glucuronide (or 17beta-estradiol 17-O-(beta-D-glucuronate)), androstanediol glucuronide (or 5alpha-androstane-3alpha,17beta-diol 3-O-(beta-D-glucuronate)), and estrone 3-sulfate, as well as bile acids taurocholate and glycocholate, driven by an outward gradient of dicarboxylates such as glutarate or succinate. Its function is as follows. Similar uptake function as Isoform 1. In terms of biological role, lack of transporter activity. In Homo sapiens (Human), this protein is Steroid transmembrane transporter SLC22A24.